The chain runs to 407 residues: Phosphopentomutase (407 aa).

Residues aspartate 10, aspartate 306, histidine 311, aspartate 347, histidine 348, and histidine 359 each coordinate Mn(2+).

Belongs to the phosphopentomutase family. The cofactor is Mn(2+).

The protein localises to the cytoplasm. It catalyses the reaction 2-deoxy-alpha-D-ribose 1-phosphate = 2-deoxy-D-ribose 5-phosphate. The catalysed reaction is alpha-D-ribose 1-phosphate = D-ribose 5-phosphate. It participates in carbohydrate degradation; 2-deoxy-D-ribose 1-phosphate degradation; D-glyceraldehyde 3-phosphate and acetaldehyde from 2-deoxy-alpha-D-ribose 1-phosphate: step 1/2. In terms of biological role, isomerase that catalyzes the conversion of deoxy-ribose 1-phosphate (dRib-1-P) and ribose 1-phosphate (Rib-1-P) to deoxy-ribose 5-phosphate (dRib-5-P) and ribose 5-phosphate (Rib-5-P), respectively. The protein is Phosphopentomutase of Serratia proteamaculans (strain 568).